A 68-amino-acid polypeptide reads, in one-letter code: U2-agatoxin-Ao1u (68 aa).

The signal sequence occupies residues 1 to 20 (MKAIISLLLISAMVFSMIEA). A propeptide spanning residues 21 to 34 (VPLEEGLQLFEGER) is cleaved from the precursor. 3 cysteine pairs are disulfide-bonded: C36-C52, C43-C57, and C51-C67.

This sequence belongs to the neurotoxin 01 (U2-agtx) family. As to expression, expressed by the venom gland.

The protein resides in the secreted. Its function is as follows. Insect active toxin causing rapid but reversible paralysis in crickets. No activity shown in mammals. Does not show effect on mammalian voltage-gated calcium channels. The protein is U2-agatoxin-Ao1u of Agelena orientalis (Funnel-web spider).